A 783-amino-acid chain; its full sequence is MKKNYYSLISFSIFTALYSTAGFADLQQQCLAGVPQFSGEVVKGNANEMPVYIEADKAELNHPTKGVYQGNVDIKQGNRHLITETAEIIQSGQDENVQRYAYAKGGFDYKDNIINLTGDDAKVHLNTKDTDVKNADYQFVGRQGRGSAQSAEVREDYRLLNNATFTSCLPNDNSWQIEAKEMKQYIKEEYAEMWHARFKVAGVPVFYTPYLQLPIGDRRRSGLLIPSAGSSSRDGYWYSQPIYWNIAPNYDATFTPKYMTHRGWQMNGEFRYLNEIGEGKIAGEYLGDDRYKDYIGDNKSRHLFYWAHNAKLFDNWRLNVNYTKVSDKRYFSDFDSDYGSSTDGYATQTARLAYFQPNYNFAISAKQYQVFDEVSVGPYKALPQIDFNYYQNDLAQGLLDFKLFAQAVRFENDSTLMPTAWRYHAEPSLNLPMSNQYGSLNVETKLYATHYEQRKGSSARAEDIDRSVNRMIPQIKVDLQTVLASDKTFVDGFTQTLEPHLQYLYRPYRDQSNIGSKRNTEYLGYGYDSALLQQDYFSLFRDRRYSGLDRIASANQFTLGGTTRFYDEQANERFNLSLGQILYLNDSRIDNNSDHSTSGRASSWALESNWKLSDQWNWRGSYQYDTRLNETSLANTTLEYNPEKNNLIQLNYRYASQAYIDQNLTSGANRYNQDIKQIGTTIAWEVSDNWVLVGRYYHDIALNKLVEEYAGIKYNTCCWSVGVGARRHLVSKSNYTYSANKDTIYDNSFGITFELRGLGNEQHSGIVDMLDKGMLPYVKPFNL.

Positions 1 to 24 are cleaved as a signal peptide; sequence MKKNYYSLISFSIFTALYSTAGFA.

Belongs to the LptD family. Component of the lipopolysaccharide transport and assembly complex. Interacts with LptE and LptA.

The protein localises to the cell outer membrane. In terms of biological role, together with LptE, is involved in the assembly of lipopolysaccharide (LPS) at the surface of the outer membrane. The sequence is that of LPS-assembly protein LptD from Mannheimia succiniciproducens (strain KCTC 0769BP / MBEL55E).